Reading from the N-terminus, the 1481-residue chain is Cystic fibrosis transmembrane conductance regulator (1481 aa).

The Cytoplasmic portion of the chain corresponds to Met-1 to Phe-77. A helical transmembrane segment spans residues Phe-78 to Gln-98. The 285-residue stretch at Phe-81–Leu-365 folds into the ABC transmembrane type-1 1 domain. The Extracellular segment spans residues Pro-99–Tyr-122. The chain crosses the membrane as a helical span at residues Leu-123–His-146. Residues His-147–Leu-195 are Cytoplasmic-facing. Residues Ala-196–Trp-216 form a helical membrane-spanning segment. The Extracellular segment spans residues Glu-217–Ser-222. The chain crosses the membrane as a helical span at residues Ala-223–Met-243. Over Met-244–Lys-298 the chain is Cytoplasmic. A helical transmembrane segment spans residues Ala-299–Phe-319. The Extracellular portion of the chain corresponds to Leu-320–Thr-339. The helical transmembrane segment at Ile-340–Val-358 threads the bilayer. Residues Gln-359 to Ser-858 lie on the Cytoplasmic side of the membrane. ATP is bound by residues Trp-401, Ser-434, Gly-458–Thr-465, and Gln-493. An ABC transporter 1 domain is found at Asn-423–Gly-646. Residue Cys-524 is the site of S-palmitoyl cysteine attachment. Phosphoserine occurs at positions 549 and 660. Residues Ser-654–Glu-831 are disordered R region. At Ser-670 the chain carries Phosphoserine; by PKA. Position 686 is a phosphoserine (Ser-686). Lys-688 is covalently cross-linked (Glycyl lysine isopeptide (Lys-Gly) (interchain with G-Cter in ubiquitin)). A phosphoserine mark is found at Ser-700 and Ser-712. Residue Thr-717 is modified to Phosphothreonine. Phosphoserine occurs at positions 737, 753, 768, 790, 795, and 813. A helical membrane pass occupies residues Leu-859–Val-879. One can recognise an ABC transmembrane type-1 2 domain in the interval Leu-859–Ser-1155. Over Leu-880–Ile-918 the chain is Extracellular. N-linked (GlcNAc...) asparagine glycosylation is found at Asn-894, Asn-900, and Asn-909. Residues Tyr-919–His-939 form a discontinuously helical membrane-spanning segment. Over Thr-940–Thr-990 the chain is Cytoplasmic. Residues Ile-991–Leu-1011 traverse the membrane as a helical segment. Residues Gln-1012–Pro-1013 lie on the Extracellular side of the membrane. The helical transmembrane segment at Tyr-1014–Leu-1034 threads the bilayer. Over Gln-1035–Thr-1095 the chain is Cytoplasmic. A helical membrane pass occupies residues Leu-1096–Phe-1116. At Ile-1117–Gly-1130 the chain is on the extracellular side. Residues Ile-1131 to Ile-1151 traverse the membrane as a helical segment. Topologically, residues Asp-1152–Leu-1481 are cytoplasmic. An ABC transporter 2 domain is found at Met-1211–His-1444. ATP-binding positions include Tyr-1220 and Gly-1245–Ser-1252. The tract at residues Arg-1387–Leu-1481 is interaction with GORASP2. A lipid anchor (S-palmitoyl cysteine) is attached at Cys-1396. Ser-1445 and Ser-1457 each carry phosphoserine. Residues His-1453 to Leu-1481 are disordered. The span at Glu-1471–Leu-1481 shows a compositional bias: acidic residues. The short motif at Thr-1479–Leu-1481 is the PDZ-binding element.

The protein belongs to the ABC transporter superfamily. ABCC family. CFTR transporter (TC 3.A.1.202) subfamily. As to quaternary structure, monomer; does not require oligomerization for channel activity. May form oligomers in the membrane. Interacts with SLC26A3, SLC26A6 and NHERF1. Interacts with SHANK2. Interacts with MYO6. Interacts (via C-terminus) with GOPC (via PDZ domain); this promotes CFTR internalization and thereby decreases channel activity. Interacts with SLC4A7 through NHERF1. Found in a complex with MYO5B and RAB11A. Interacts with ANO1. Interacts with SLC26A8. Interacts with AHCYL1; the interaction increases CFTR activity. Interacts with CSE1L. The core-glycosylated form interacts with GORASP2 (via PDZ GRASP-type 1 domain) in respone to ER stress. Interacts with MARCHF2; the interaction leads to CFTR ubiqtuitination and degradation. Interacts with ADGRG2. N-glycosylated. Post-translationally, phosphorylated; cAMP treatment promotes phosphorylation and activates the channel. Dephosphorylation decreases the ATPase activity (in vitro). Phosphorylation at PKA sites activates the channel. Phosphorylation at PKC sites enhances the response to phosphorylation by PKA. Phosphorylated by AMPK; this inhibits channel activity. In terms of processing, ubiquitinated, leading to its degradation in the lysosome. Deubiquitination by USP10 in early endosomes enhances its endocytic recycling to the cell membrane. Ubiquitinated by RNF185 during ER stress. Ubiquitinated by MARCHF2.

The protein localises to the apical cell membrane. It is found in the early endosome membrane. It localises to the cell membrane. The protein resides in the recycling endosome membrane. Its subcellular location is the endoplasmic reticulum membrane. The protein localises to the nucleus. The enzyme catalyses ATP + H2O + closed Cl(-) channel = ADP + phosphate + open Cl(-) channel.. It carries out the reaction chloride(in) = chloride(out). The catalysed reaction is hydrogencarbonate(in) = hydrogencarbonate(out). It catalyses the reaction ATP + H2O = ADP + phosphate + H(+). Its function is as follows. Epithelial ion channel that plays an important role in the regulation of epithelial ion and water transport and fluid homeostasis. Mediates the transport of chloride ions across the cell membrane. Possesses an intrinsic ATPase activity and utilizes ATP to gate its channel; the passive flow of anions through the channel is gated by cycles of ATP binding and hydrolysis by the ATP-binding domains. The ion channel is also permeable to HCO(3)(-); selectivity depends on the extracellular chloride concentration. Exerts its function also by modulating the activity of other ion channels and transporters. Contributes to the regulation of the pH and the ion content of the epithelial fluid layer. Modulates the activity of the epithelial sodium channel (ENaC) complex, in part by regulating the cell surface expression of the ENaC complex. May regulate bicarbonate secretion and salvage in epithelial cells by regulating the transporter SLC4A7. Can inhibit the chloride channel activity of ANO1. Plays a role in the chloride and bicarbonate homeostasis during sperm epididymal maturation and capacitation. The sequence is that of Cystic fibrosis transmembrane conductance regulator from Saimiri boliviensis boliviensis (Bolivian squirrel monkey).